Consider the following 475-residue polypeptide: Aspartyl/glutamyl-tRNA(Asn/Gln) amidotransferase subunit B (475 aa).

Belongs to the GatB/GatE family. GatB subfamily. Heterotrimer of A, B and C subunits.

The enzyme catalyses L-glutamyl-tRNA(Gln) + L-glutamine + ATP + H2O = L-glutaminyl-tRNA(Gln) + L-glutamate + ADP + phosphate + H(+). It catalyses the reaction L-aspartyl-tRNA(Asn) + L-glutamine + ATP + H2O = L-asparaginyl-tRNA(Asn) + L-glutamate + ADP + phosphate + 2 H(+). Allows the formation of correctly charged Asn-tRNA(Asn) or Gln-tRNA(Gln) through the transamidation of misacylated Asp-tRNA(Asn) or Glu-tRNA(Gln) in organisms which lack either or both of asparaginyl-tRNA or glutaminyl-tRNA synthetases. The reaction takes place in the presence of glutamine and ATP through an activated phospho-Asp-tRNA(Asn) or phospho-Glu-tRNA(Gln). The chain is Aspartyl/glutamyl-tRNA(Asn/Gln) amidotransferase subunit B from Bacillus mycoides (strain KBAB4) (Bacillus weihenstephanensis).